The primary structure comprises 128 residues: uncharacterized protein (128 aa).

This is an uncharacterized protein from Borreliella burgdorferi (strain ATCC 35210 / DSM 4680 / CIP 102532 / B31) (Borrelia burgdorferi).